Reading from the N-terminus, the 965-residue chain is Isoleucine--tRNA ligase (965 aa).

A 'HIGH' region motif is present at residues 68-78 (PYANGSLHMGH). An L-isoleucyl-5'-AMP-binding site is contributed by Glu-582. The 'KMSKS' region signature appears at 623-627 (KMSKS). Residue Lys-626 participates in ATP binding. Positions 936, 939, 956, and 959 each coordinate Zn(2+).

This sequence belongs to the class-I aminoacyl-tRNA synthetase family. IleS type 1 subfamily. Monomer. Requires Zn(2+) as cofactor.

It localises to the cytoplasm. It carries out the reaction tRNA(Ile) + L-isoleucine + ATP = L-isoleucyl-tRNA(Ile) + AMP + diphosphate. In terms of biological role, catalyzes the attachment of isoleucine to tRNA(Ile). As IleRS can inadvertently accommodate and process structurally similar amino acids such as valine, to avoid such errors it has two additional distinct tRNA(Ile)-dependent editing activities. One activity is designated as 'pretransfer' editing and involves the hydrolysis of activated Val-AMP. The other activity is designated 'posttransfer' editing and involves deacylation of mischarged Val-tRNA(Ile). This chain is Isoleucine--tRNA ligase, found in Prochlorococcus marinus subsp. pastoris (strain CCMP1986 / NIES-2087 / MED4).